The primary structure comprises 155 residues: Interleukin-2 (155 aa).

The signal sequence occupies residues 1–20 (MYKIQLLSCIALTLALVANG). The O-linked (GalNAc...) threonine glycan is linked to T23. C79 and C127 are oxidised to a cystine.

It belongs to the IL-2 family.

The protein localises to the secreted. In terms of biological role, cytokine produced by activated CD4-positive helper T-cells and to a lesser extend activated CD8-positive T-cells and natural killer (NK) cells that plays pivotal roles in the immune response and tolerance. Binds to a receptor complex composed of either the high-affinity trimeric IL-2R (IL2RA/CD25, IL2RB/CD122 and IL2RG/CD132) or the low-affinity dimeric IL-2R (IL2RB and IL2RG). Interaction with the receptor leads to oligomerization and conformation changes in the IL-2R subunits resulting in downstream signaling starting with phosphorylation of JAK1 and JAK3. In turn, JAK1 and JAK3 phosphorylate the receptor to form a docking site leading to the phosphorylation of several substrates including STAT5. This process leads to activation of several pathways including STAT, phosphoinositide-3-kinase/PI3K and mitogen-activated protein kinase/MAPK pathways. Functions as a T-cell growth factor and can increase NK-cell cytolytic activity as well. Promotes strong proliferation of activated B-cells and subsequently immunoglobulin production. Plays a pivotal role in regulating the adaptive immune system by controlling the survival and proliferation of regulatory T-cells, which are required for the maintenance of immune tolerance. Moreover, participates in the differentiation and homeostasis of effector T-cell subsets, including Th1, Th2, Th17 as well as memory CD8-positive T-cells. This Bos taurus (Bovine) protein is Interleukin-2 (IL2).